The chain runs to 263 residues: Putative methyltransferase DDB_G0268948 (263 aa).

The protein belongs to the methyltransferase superfamily.

The polypeptide is Putative methyltransferase DDB_G0268948 (Dictyostelium discoideum (Social amoeba)).